A 201-amino-acid chain; its full sequence is Small ribosomal subunit protein uS4c (201 aa).

In terms of domain architecture, S4 RNA-binding spans 89 to 151 (MRLDNILFRL…QKSKTLIQNY (63 aa)).

It belongs to the universal ribosomal protein uS4 family. As to quaternary structure, part of the 30S ribosomal subunit. Contacts protein S5. The interaction surface between S4 and S5 is involved in control of translational fidelity.

The protein resides in the plastid. It localises to the chloroplast. One of the primary rRNA binding proteins, it binds directly to 16S rRNA where it nucleates assembly of the body of the 30S subunit. Its function is as follows. With S5 and S12 plays an important role in translational accuracy. This Phaseolus vulgaris (Kidney bean) protein is Small ribosomal subunit protein uS4c (rps4).